We begin with the raw amino-acid sequence, 762 residues long: Endonuclease MutS2 (762 aa).

Residues 1 to 22 (MSDAPKRSLNPTLMMNNNNTPP) are disordered. Residues 9–20 (LNPTLMMNNNNT) are compositionally biased toward low complexity. 333-340 (GVNAGGKT) serves as a coordination point for ATP. The Smr domain occupies 688 to 762 (LDLRGQRSEE…GGSGVKIVKL (75 aa)).

It belongs to the DNA mismatch repair MutS family. MutS2 subfamily. As to quaternary structure, homodimer. Binds to stalled ribosomes, contacting rRNA.

ATPase activity is stimulated by DNA. Its function is as follows. Endonuclease that is involved in the suppression of homologous recombination and may thus have a key role in the control of bacterial genetic diversity. Also involved in repairing oxidative DNA damage. Has ATPase activity. Binds DNA. In terms of biological role, endonuclease that is involved in the suppression of homologous recombination and thus may have a key role in the control of bacterial genetic diversity. Acts as a ribosome collision sensor, splitting the ribosome into its 2 subunits. Detects stalled/collided 70S ribosomes which it binds and splits by an ATP-hydrolysis driven conformational change. Acts upstream of the ribosome quality control system (RQC), a ribosome-associated complex that mediates the extraction of incompletely synthesized nascent chains from stalled ribosomes and their subsequent degradation. Probably generates substrates for RQC. This is Endonuclease MutS2 from Helicobacter pylori (strain ATCC 700392 / 26695) (Campylobacter pylori).